The chain runs to 431 residues: Histidinol dehydrogenase (431 aa).

The NAD(+) site is built by Y127, Q189, and N212. Residues S237, Q259, and H262 each coordinate substrate. The Zn(2+) site is built by Q259 and H262. Active-site proton acceptor residues include E326 and H327. Substrate is bound by residues H327, D360, E414, and H419. D360 serves as a coordination point for Zn(2+). H419 is a Zn(2+) binding site.

This sequence belongs to the histidinol dehydrogenase family. Zn(2+) serves as cofactor.

The enzyme catalyses L-histidinol + 2 NAD(+) + H2O = L-histidine + 2 NADH + 3 H(+). It participates in amino-acid biosynthesis; L-histidine biosynthesis; L-histidine from 5-phospho-alpha-D-ribose 1-diphosphate: step 9/9. Functionally, catalyzes the sequential NAD-dependent oxidations of L-histidinol to L-histidinaldehyde and then to L-histidine. The chain is Histidinol dehydrogenase from Xylella fastidiosa (strain 9a5c).